The primary structure comprises 106 residues: Urease subunit beta (106 aa).

The protein belongs to the urease beta subunit family. Heterotrimer of UreA (gamma), UreB (beta) and UreC (alpha) subunits. Three heterotrimers associate to form the active enzyme.

Its subcellular location is the cytoplasm. It catalyses the reaction urea + 2 H2O + H(+) = hydrogencarbonate + 2 NH4(+). It participates in nitrogen metabolism; urea degradation; CO(2) and NH(3) from urea (urease route): step 1/1. The sequence is that of Urease subunit beta from Escherichia coli O157:H7.